We begin with the raw amino-acid sequence, 141 residues long: Hemoglobin subunit alpha (141 aa).

Residues 2–141 (AFTACEKQTI…ICQELSSRYR (140 aa)) form the Globin domain. His-59 lines the O2 pocket. Heme b is bound at residue His-88.

It belongs to the globin family. In terms of assembly, heterotetramer of two alpha chains and two beta chains. As to expression, red blood cells.

In terms of biological role, involved in oxygen transport from gills to the various peripheral tissues. The sequence is that of Hemoglobin subunit alpha (HBA) from Mustelus griseus (Spotless smooth-hound).